The primary structure comprises 296 residues: 4-diphosphocytidyl-2-C-methyl-D-erythritol kinase (296 aa).

Residue Lys14 is part of the active site. Position 97–107 (97–107 (PMGAGMGGGSS)) interacts with ATP. Asp139 is a catalytic residue.

It belongs to the GHMP kinase family. IspE subfamily.

The enzyme catalyses 4-CDP-2-C-methyl-D-erythritol + ATP = 4-CDP-2-C-methyl-D-erythritol 2-phosphate + ADP + H(+). It participates in isoprenoid biosynthesis; isopentenyl diphosphate biosynthesis via DXP pathway; isopentenyl diphosphate from 1-deoxy-D-xylulose 5-phosphate: step 3/6. Functionally, catalyzes the phosphorylation of the position 2 hydroxy group of 4-diphosphocytidyl-2C-methyl-D-erythritol. The protein is 4-diphosphocytidyl-2-C-methyl-D-erythritol kinase of Polynucleobacter necessarius subsp. necessarius (strain STIR1).